Here is a 396-residue protein sequence, read N- to C-terminus: Phosphoglycerate kinase (396 aa).

Substrate contacts are provided by residues 21-23, Arg36, 59-62, Arg118, and Arg151; these read DFN and HLGR. ATP contacts are provided by residues Lys201, Gly292, Glu323, and 349–352; that span reads GGDS.

This sequence belongs to the phosphoglycerate kinase family. In terms of assembly, monomer.

It localises to the cytoplasm. It carries out the reaction (2R)-3-phosphoglycerate + ATP = (2R)-3-phospho-glyceroyl phosphate + ADP. It functions in the pathway carbohydrate degradation; glycolysis; pyruvate from D-glyceraldehyde 3-phosphate: step 2/5. This chain is Phosphoglycerate kinase, found in Leptospira interrogans serogroup Icterohaemorrhagiae serovar Lai (strain 56601).